A 1480-amino-acid chain; its full sequence is MRFSIEYIDWELSPCDPAYDFVGKDLPTANEELTTVPVIRVFGLNEEAETVCCFIHNVFPYIYVEYSSFAETLDLEVPDFLSQLQTSINYALALAARANPETYKPAVQSVQLVKGIPFYGYSFCFQKFLKICLFSPKNRDRLVDLFRQGAILNKVIQVYESHLPYLLQFMVDHNLYGCAPIDLDDSIIKRDDLLSFCNVEVHVSPNAILNACWLSERNIHTDLYETHASSPNSLLVTSLAEIWKSEASRRNLTSSDETNSFSKLHQSQFGLKEESSHEPRSSQHWKNEVAMKDLLKNLIKSKLESSSDVNTPLIFDPWPELPTIYSAIHTKDYVRPSQNDISVSQISVDEKICTSYESLPKIQLEQNTAPVIESSFEQLDSELERILGDTLFDSFPYVEPNVDRSKFPKSPLNSSQEVTIHSSQDRQSPPSSPLKDVPSQINPFSPSLRLKGGSPITKREIEFCRDLPNRPTSSEPNQGDTRKAGKRLKYSRNLDDYHICTQIPEDYSPKFLSQHESFVYKQQPPSTDDLYGTMKKLKIPFSIPTNVHYSSEKDIPSYSQEYLGKSHYPIGVSSRYLPEFQSDGSVSEKVRLNPLKLSNFHGERTWQYIKPAPLAVDLSNLESKEAVSEEIQSPQRLSRSKVFRKDPYSCVRILALELFCCSHGGLTPDPTKDSIECCFWAYQEDVNSSMIDRVGFIVVDKSASNSSFGRSFPSCTVLVVNSELELINEVIGLNRQLDPTIVCGYEVHNSSWGYLIERASYRFNYDLPEQLSRLKCTSKANFAKKENAWKYTTTSSINIVGRHVLNIWRILRGEVNLLNYSLENVVLNIFKKQTPYYNQADKVHLWQSSRFHEKQILLNYMLNRTRYCLEILSACAIVTKIREQARIIGIDFMSVISRGSQFKVESIMFRIAKPENYIFPSPSAKQVAEQNALEALPLVMEPKSDLYNNPVVVLDFQSLYPSIIIAYNLCYSTCLGPVKIVNGKVKLGFMFHSSNPNIVNLIKNDVYISPNGYAYVKENVRKSLLAKMLEELIETRNMVKRGMKDCDSDYVNKVLNSRQLALKLIANVTYGYTSASFSGRMPCSEIADTIVETGREILSYSLEYINTLDFCHAKVVYGDTDSLFVELPGATKEQAFDIGQQLANNITSRFPSPIRLKFEKIYFPCFLLAKKRYVGFKFESVSQKAPIFEAKGIETVRRDGTPVQQQLLRRCLEILFKTKDLSTVKKEFQNVCYQIMSGNVPVMDFCFSKEVRLEKYKELSTAPPGAVMARRLMTKDPRREPQYGERVPYLIIAAAPGTTLANRSVAPEEFLSSSFSQLDINYYINNSLIPPLDRFLNLLGASAQSWYHEMPKPRTSLKLTETVKGGIQKKTLDTFLMEKLCSSCLKNNIEIIPDKINSLCSDCLKNPCATISKAVTQHNAYNKKLSLLFDICRGCSKLSSSDPVLCKSNSCKVYYDRAKTENYAKVQAEMLTKTLGSLDW.

Residues 403 to 488 (DRSKFPKSPL…GDTRKAGKRL (86 aa)) form a disordered region. The span at 411–427 (PLNSSQEVTIHSSQDRQ) shows a compositional bias: polar residues. The span at 457 to 468 (TKREIEFCRDLP) shows a compositional bias: basic and acidic residues. Over residues 470-479 (RPTSSEPNQG) the composition is skewed to polar residues. Cysteine 1381, cysteine 1384, cysteine 1400, and cysteine 1403 together coordinate Zn(2+). The CysA-type zinc-finger motif lies at 1381 to 1403 (CSSCLKNNIEIIPDKINSLCSDC). Positions 1432, 1435, 1446, and 1451 each coordinate [4Fe-4S] cluster. A CysB motif motif is present at residues 1432-1451 (CRGCSKLSSSDPVLCKSNSC).

It belongs to the DNA polymerase type-B family. Forms DNA polymerase zeta with rev7. [4Fe-4S] cluster is required as a cofactor.

The protein localises to the mitochondrion. Its subcellular location is the nucleus. It catalyses the reaction DNA(n) + a 2'-deoxyribonucleoside 5'-triphosphate = DNA(n+1) + diphosphate. Functionally, nonessential DNA polymerase. Required for DNA damage induced mutagenesis. Involved in DNA repair, mitochondrial DNA repair and translesion synthesis. Has a role in the bypass of abasic (AP) sites. The chain is DNA polymerase zeta catalytic subunit (rev3) from Schizosaccharomyces pombe (strain 972 / ATCC 24843) (Fission yeast).